A 321-amino-acid polypeptide reads, in one-letter code: Sideroflexin-3 (321 aa).

N-acetylmethionine is present on M1. 4 consecutive transmembrane segments (helical) span residues 146 to 164 (LGMA…ALGL), 174 to 194 (LVGR…NIPL), 226 to 246 (FQVV…PPVI), and 266 to 286 (LQMG…CALF).

Belongs to the sideroflexin family.

It is found in the mitochondrion membrane. The catalysed reaction is L-serine(in) = L-serine(out). Its function is as follows. Mitochondrial serine transporter that mediates transport of serine into mitochondria, an important step of the one-carbon metabolism pathway. Mitochondrial serine is converted to glycine and formate, which then exits to the cytosol where it is used to generate the charged folates that serve as one-carbon donors. In Bos taurus (Bovine), this protein is Sideroflexin-3 (SFXN3).